A 448-amino-acid chain; its full sequence is MREIVYLQTGQCGNQIGAAFWQTISGEHGLDGSGVYNGSSDLQLERMNVYFNEASGNKYVPRAVLVDLEPGTMDAVRAGPFGQLFRPDNFVFGQSGAGNNWAKGHYTEGAELVDQVVDVVRREAEGCDCLQGFQITHSLGGGTGAGMGTLLISKIREEFPDRMMATFSVMPSPKVSDTVVEPYNATLSVHQLVEHSDETFCIDNEALYDICMRTLKLSNPSYGDLNHLVSAVMSGVTTCLRFPGQLNSDLRKLAVNMVPFPRLHFFMVGFAPLTSRGAHSFRAVSVPELTQQMFDPKNMMAASDFRNGRYLTCSAIFRGKVSMKEVEDQMRNIQSKNQTYFVEWIPNNIQTALCSIPPRGLKMSSTFIGNSTSIQELFKRVGDQFTAMFRRKAFLHWYTGEGMDEMEFTEAESNMNDLVSEYQQYQDASISEGEEEYLEEEEPLEHEE.

Residues Gln11, Glu69, Ser138, Gly142, Thr143, Gly144, Asn204, and Asn226 each coordinate GTP. Glu69 contacts Mg(2+). Residues 425 to 448 (YQDASISEGEEEYLEEEEPLEHEE) form a disordered region. A compositionally biased stretch (acidic residues) spans 432–448 (EGEEEYLEEEEPLEHEE).

It belongs to the tubulin family. As to quaternary structure, dimer of alpha and beta chains. A typical microtubule is a hollow water-filled tube with an outer diameter of 25 nm and an inner diameter of 15 nM. Alpha-beta heterodimers associate head-to-tail to form protofilaments running lengthwise along the microtubule wall with the beta-tubulin subunit facing the microtubule plus end conferring a structural polarity. Microtubules usually have 13 protofilaments but different protofilament numbers can be found in some organisms and specialized cells. Mg(2+) serves as cofactor.

The protein localises to the cytoplasm. Its subcellular location is the cytoskeleton. Its function is as follows. Tubulin is the major constituent of microtubules, a cylinder consisting of laterally associated linear protofilaments composed of alpha- and beta-tubulin heterodimers. Microtubules grow by the addition of GTP-tubulin dimers to the microtubule end, where a stabilizing cap forms. Below the cap, tubulin dimers are in GDP-bound state, owing to GTPase activity of alpha-tubulin. This Aspergillus parasiticus protein is Tubulin beta chain (benR).